We begin with the raw amino-acid sequence, 332 residues long: D-galactose/methyl-galactoside binding periplasmic protein MglB (332 aa).

The first 23 residues, 1 to 23 (MNKKVLTLSAVMASMLFGAAAHA), serve as a signal peptide directing secretion. Beta-D-galactose-binding residues include D37 and N114. Positions 37 and 114 each coordinate beta-D-glucose. D157, N159, D161, Q163, and Q165 together coordinate Ca(2+). Residues H175, D177, and R181 each contribute to the beta-D-galactose site. Residues H175, D177, and R181 each contribute to the beta-D-glucose site. Residue E228 participates in Ca(2+) binding. Beta-D-galactose contacts are provided by N234, D259, and N279. Residues N234, D259, and N279 each coordinate beta-D-glucose.

This sequence belongs to the bacterial solute-binding protein 2 family. The ABC transporter complex is composed of one ATP-binding protein (MglA), two transmembrane proteins (MglC) and a solute-binding protein (MglB).

It localises to the periplasm. Its function is as follows. Part of the ABC transporter complex MglABC involved in galactose/methyl galactoside import. In addition, binds D-galactose and D-glucose and plays a role in the chemotaxis towards these two sugars by interacting with the Trg chemoreceptor. The sequence is that of D-galactose/methyl-galactoside binding periplasmic protein MglB (mglB) from Escherichia coli O6:H1 (strain CFT073 / ATCC 700928 / UPEC).